The chain runs to 529 residues: MQQRRPVRRALLSVSDKAGIVEFAQALSARGVELLSTGGTARLLAEKGLPVTEVSDYTGFPEMMDGRVKTLHPKVHGGILGRRGQDDAIMEEHQIQPIDMVVVNLYPFAQTVAREGCSLEDAVENIDIGGPTMVRSAAKNHKDVAIVVKSSDYDAIIKEMDANEGSLTLATRFDLAIKAFEHTAAYDSMIANYFGSMVPAYHGESKEAAGRFPRTLNLNFIKKQDMRYGENSHQQAAFYIEENVKEASVATATQVQGKALSYNNIADTDAALECVKEFAEPACVIVKHANPCGVAIGNSILDAYDRAYKTDPTSAFGGIIAFNRELDAETAQAIISRQFVEVIIAPSASEEALQITAAKQNVRVLTCGQWAERVPGLDFKRVNGGLLVQDRDLGMVGAEELRVVTKRQPTEQELRDALFCWKVAKFVKSNAIVYAKNNMTIGIGAGQMSRVYSAKIAGIKAADEGLEVKGSSMASDAFFPFRDGIDAAAAAGVTCVIQPGGSIRDDEVIAAADEHGIAMLFTDMRHFRH.

An MGS-like domain is found at 1–148 (MQQRRPVRRA…KNHKDVAIVV (148 aa)). An N6-acetyllysine modification is found at Lys-287.

Belongs to the PurH family.

It carries out the reaction (6R)-10-formyltetrahydrofolate + 5-amino-1-(5-phospho-beta-D-ribosyl)imidazole-4-carboxamide = 5-formamido-1-(5-phospho-D-ribosyl)imidazole-4-carboxamide + (6S)-5,6,7,8-tetrahydrofolate. It catalyses the reaction IMP + H2O = 5-formamido-1-(5-phospho-D-ribosyl)imidazole-4-carboxamide. Its pathway is purine metabolism; IMP biosynthesis via de novo pathway; 5-formamido-1-(5-phospho-D-ribosyl)imidazole-4-carboxamide from 5-amino-1-(5-phospho-D-ribosyl)imidazole-4-carboxamide (10-formyl THF route): step 1/1. It participates in purine metabolism; IMP biosynthesis via de novo pathway; IMP from 5-formamido-1-(5-phospho-D-ribosyl)imidazole-4-carboxamide: step 1/1. This chain is Bifunctional purine biosynthesis protein PurH, found in Escherichia fergusonii (strain ATCC 35469 / DSM 13698 / CCUG 18766 / IAM 14443 / JCM 21226 / LMG 7866 / NBRC 102419 / NCTC 12128 / CDC 0568-73).